Here is a 264-residue protein sequence, read N- to C-terminus: Thymidylate synthase (264 aa).

DUMP is bound at residue Arg-21. A (6R)-5,10-methylene-5,6,7,8-tetrahydrofolate-binding site is contributed by His-51. Arg-126 to Arg-127 contacts dUMP. Residue Cys-146 is the Nucleophile of the active site. DUMP-binding positions include Arg-166–Asp-169, Asn-177, and His-207–Tyr-209. Asp-169 lines the (6R)-5,10-methylene-5,6,7,8-tetrahydrofolate pocket. Ser-263 contacts (6R)-5,10-methylene-5,6,7,8-tetrahydrofolate.

It belongs to the thymidylate synthase family. Bacterial-type ThyA subfamily. As to quaternary structure, homodimer.

It is found in the cytoplasm. It catalyses the reaction dUMP + (6R)-5,10-methylene-5,6,7,8-tetrahydrofolate = 7,8-dihydrofolate + dTMP. It functions in the pathway pyrimidine metabolism; dTTP biosynthesis. In terms of biological role, catalyzes the reductive methylation of 2'-deoxyuridine-5'-monophosphate (dUMP) to 2'-deoxythymidine-5'-monophosphate (dTMP) while utilizing 5,10-methylenetetrahydrofolate (mTHF) as the methyl donor and reductant in the reaction, yielding dihydrofolate (DHF) as a by-product. This enzymatic reaction provides an intracellular de novo source of dTMP, an essential precursor for DNA biosynthesis. In Bacillus pumilus (strain SAFR-032), this protein is Thymidylate synthase.